Consider the following 333-residue polypeptide: Probable malate dehydrogenase 3 (333 aa).

12 to 18 (GAAGQIA) is a binding site for NAD(+). Residues Arg-93 and Arg-99 each coordinate substrate. Residues Asn-106, Gln-113, and 130–132 (VGN) each bind NAD(+). Residues Asn-132 and Arg-163 each contribute to the substrate site. His-188 (proton acceptor) is an active-site residue.

It belongs to the LDH/MDH superfamily. MDH type 2 family. Homodimer.

The catalysed reaction is (S)-malate + NAD(+) = oxaloacetate + NADH + H(+). In terms of biological role, catalyzes the reversible oxidation of malate to oxaloacetate. The chain is Probable malate dehydrogenase 3 (mdhC) from Dictyostelium discoideum (Social amoeba).